The primary structure comprises 391 residues: Putative neutrophil cytosol factor 1B (391 aa).

The region spanning 1 to 126 (MGDTFIRHIA…DFFKVRPDDL (126 aa)) is the PX domain. SH3 domains follow at residues 157 to 216 (IILQ…PLDS) and 227 to 286 (YAGE…KSGQ). Residues 286 to 391 (QDVSQAQRQI…STKRKLASAV (106 aa)) form a disordered region. Ser-304 and Ser-305 each carry phosphoserine. Positions 310-319 (HSIHQRSRKR) are enriched in basic residues. Residues Ser-321, Ser-329, Ser-346, and Ser-349 each carry the phosphoserine modification.

The protein resides in the cytoplasm. In terms of biological role, may be required for activation of the latent NADPH oxidase (necessary for superoxide production). The polypeptide is Putative neutrophil cytosol factor 1B (NCF1B) (Homo sapiens (Human)).